Consider the following 115-residue polypeptide: Protein translation factor SUI1 homolog (115 aa).

Belongs to the SUI1 family. As to expression, expressed in all tissues examined.

In terms of biological role, probably involved in translation. In Oryza sativa subsp. indica (Rice), this protein is Protein translation factor SUI1 homolog (GOS2).